A 564-amino-acid chain; its full sequence is Formate--tetrahydrofolate ligase (564 aa).

65-72 (TPLGEGKT) is an ATP binding site.

Belongs to the formate--tetrahydrofolate ligase family.

The catalysed reaction is (6S)-5,6,7,8-tetrahydrofolate + formate + ATP = (6R)-10-formyltetrahydrofolate + ADP + phosphate. The protein operates within one-carbon metabolism; tetrahydrofolate interconversion. This is Formate--tetrahydrofolate ligase from Roseiflexus sp. (strain RS-1).